The sequence spans 68 residues: Medusin-AS (68 aa).

Positions 1 to 22 are cleaved as a signal peptide; it reads MAFLKKSLFLVLFLGLVSLSVC. Positions 23-49 are excised as a propeptide; it reads EEEKRESEEEKNEQEEDDRDERSEEKR. A disordered region spans residues 24–46; sequence EEKRESEEEKNEQEEDDRDERSE. Residues 31–41 show a composition bias toward acidic residues; sequence EEKNEQEEDDR. Leu67 carries the leucine amide modification.

The protein belongs to the frog skin active peptide (FSAP) family. Medusin subfamily. In terms of tissue distribution, expressed by the skin glands.

The protein localises to the secreted. Its function is as follows. Antimicrobial peptide active against Gram-positive bacteria and fungi but inactive against Gram-negative bacteria. Also inhibits growth of B.dendrobatidis zoospores at high concentrations. Shows anticancer activities. Shows hemolytic activity. This Agalychnis spurrelli (Gliding leaf frog) protein is Medusin-AS.